Consider the following 24-residue polypeptide: Brevinin-1Ra (24 aa).

A disulfide bond links C18 and C24.

In terms of tissue distribution, expressed by the skin glands.

Its subcellular location is the secreted. Its function is as follows. Antimicrobial peptide. This is Brevinin-1Ra from Pelophylax ridibundus (Marsh frog).